A 291-amino-acid polypeptide reads, in one-letter code: Ribosomal RNA small subunit methyltransferase A (291 aa).

S-adenosyl-L-methionine-binding residues include histidine 37, leucine 39, glycine 64, glutamate 85, aspartate 110, and asparagine 131.

It belongs to the class I-like SAM-binding methyltransferase superfamily. rRNA adenine N(6)-methyltransferase family. RsmA subfamily.

It is found in the cytoplasm. It carries out the reaction adenosine(1518)/adenosine(1519) in 16S rRNA + 4 S-adenosyl-L-methionine = N(6)-dimethyladenosine(1518)/N(6)-dimethyladenosine(1519) in 16S rRNA + 4 S-adenosyl-L-homocysteine + 4 H(+). In terms of biological role, specifically dimethylates two adjacent adenosines (A1518 and A1519) in the loop of a conserved hairpin near the 3'-end of 16S rRNA in the 30S particle. May play a critical role in biogenesis of 30S subunits. The protein is Ribosomal RNA small subunit methyltransferase A of Dehalococcoides mccartyi (strain ATCC BAA-2100 / JCM 16839 / KCTC 5957 / BAV1).